The following is a 700-amino-acid chain: Polyribonucleotide nucleotidyltransferase (700 aa).

Residues aspartate 484 and aspartate 490 each coordinate Mg(2+). Residues 551–610 (PRVIRMVVDPEKIREIIGPGGKTISKIIAETGVKIDIEEDGRLYITASDLRSGERAKQMI) enclose the KH domain. The 69-residue stretch at 620–688 (GEIYLGKVLR…KLGRISLSRK (69 aa)) folds into the S1 motif domain.

It belongs to the polyribonucleotide nucleotidyltransferase family. Mg(2+) is required as a cofactor.

It is found in the cytoplasm. It carries out the reaction RNA(n+1) + phosphate = RNA(n) + a ribonucleoside 5'-diphosphate. In terms of biological role, involved in mRNA degradation. Catalyzes the phosphorolysis of single-stranded polyribonucleotides processively in the 3'- to 5'-direction. The sequence is that of Polyribonucleotide nucleotidyltransferase from Thermoanaerobacter sp. (strain X514).